A 359-amino-acid chain; its full sequence is MLHTPLFELCREAGGRMVPFAGWEMAVQFEGLMAEHRAVRQRCGVFDISHMGVLTLTGSGVKDKLQGLVPSDLQRIGPGEAQYTVLLNEAGGIRDDLIVYDRSDTEVVVVINAACADSDTAWIKQQLEPQGVSVSDRKAGGVLLALQGPEAVGRLERLCGESLAGVPRFGHRDLTIKGEPVFAARTGYTGEDGFELLLTASAGQSLWRQLLEDGVAPCGLGARDSLRLEAAMHLYGNDMDANTSPLECGLGWLVHLEMPIEFVGREALERQTAEGVSRKLVGLQLQGRAIARHDYPVLHNGEPVGVVTSGTFSPTLEHPVALASVRADLAKLGNELMVEIRGRQEPAVVVKRPFYRRQG.

Belongs to the GcvT family. In terms of assembly, the glycine cleavage system is composed of four proteins: P, T, L and H.

It catalyses the reaction N(6)-[(R)-S(8)-aminomethyldihydrolipoyl]-L-lysyl-[protein] + (6S)-5,6,7,8-tetrahydrofolate = N(6)-[(R)-dihydrolipoyl]-L-lysyl-[protein] + (6R)-5,10-methylene-5,6,7,8-tetrahydrofolate + NH4(+). In terms of biological role, the glycine cleavage system catalyzes the degradation of glycine. In Synechococcus sp. (strain RCC307), this protein is Aminomethyltransferase.